A 183-amino-acid polypeptide reads, in one-letter code: Capsid protein (183 aa).

The segment at 136–183 is disordered; it reads NAPILSTLPETTVVRRRGRSPRRRTPSPRRRRSQSPRRRRSQSPASQC. The span at 149–176 shows a compositional bias: basic residues; it reads VRRRGRSPRRRTPSPRRRRSQSPRRRRS. Ser155, Ser162, and Ser170 each carry phosphoserine; by host. One copy of the 1; half-length repeat lies at 155–161; it reads SPRRRTP. The tract at residues 155 to 177 is 3 X 8 AA repeats of S-P-R-R-R-[PR]-S-Q; it reads SPRRRTPSPRRRRSQSPRRRRSQ. The Bipartite nuclear localization signal motif lies at 158–175; sequence RRTPSPRRRRSQSPRRRR. 2 consecutive repeat copies span residues 162–169 and 170–177. Residues 177 to 183 are RNA binding; it reads QSPASQC.

This sequence belongs to the orthohepadnavirus core antigen family. Homodimerizes, then multimerizes. Interacts with cytosol exposed regions of viral L glycoprotein present in the reticulum-to-Golgi compartment. Interacts with human FLNB. Phosphorylated form interacts with host importin alpha; this interaction depends on the exposure of the NLS, which itself depends upon genome maturation and/or phosphorylation of the capsid protein. Interacts with host NUP153. Phosphorylated by host SRPK1, SRPK2, and maybe protein kinase C or GAPDH. Phosphorylation is critical for pregenomic RNA packaging. Protein kinase C phosphorylation is stimulated by HBx protein and may play a role in transport of the viral genome to the nucleus at the late step during the viral replication cycle.

It localises to the virion. The protein localises to the host cytoplasm. Functionally, self assembles to form an icosahedral capsid. Most capsids appear to be large particles with an icosahedral symmetry of T=4 and consist of 240 copies of capsid protein, though a fraction forms smaller T=3 particles consisting of 180 capsid proteins. Entering capsids are transported along microtubules to the nucleus. Phosphorylation of the capsid is thought to induce exposure of nuclear localization signal in the C-terminal portion of the capsid protein that allows binding to the nuclear pore complex via the importin (karyopherin-) alpha and beta. Capsids are imported in intact form through the nuclear pore into the nuclear basket, where it probably binds NUP153. Only capsids that contain the mature viral genome can release the viral DNA and capsid protein into the nucleoplasm. Immature capsids get stuck in the basket. Capsids encapsulate the pre-genomic RNA and the P protein. Pre-genomic RNA is reverse-transcribed into DNA while the capsid is still in the cytoplasm. The capsid can then either be directed to the nucleus, providing more genomes for transcription, or bud through the endoplasmic reticulum to provide new virions. The sequence is that of Capsid protein from Hepatitis B virus genotype F2 (isolate Brazil/w4B) (HBV-F).